The chain runs to 154 residues: 6,7-dimethyl-8-ribityllumazine synthase (154 aa).

5-amino-6-(D-ribitylamino)uracil contacts are provided by residues Phe-22, 57 to 59, and 81 to 83; these read VCE and TVI. 86–87 contributes to the (2S)-2-hydroxy-3-oxobutyl phosphate binding site; that stretch reads KT. His-89 (proton donor) is an active-site residue. Val-114 contacts 5-amino-6-(D-ribitylamino)uracil. Arg-128 is a binding site for (2S)-2-hydroxy-3-oxobutyl phosphate.

It belongs to the DMRL synthase family. As to quaternary structure, forms an icosahedral capsid composed of 60 subunits, arranged as a dodecamer of pentamers.

It carries out the reaction (2S)-2-hydroxy-3-oxobutyl phosphate + 5-amino-6-(D-ribitylamino)uracil = 6,7-dimethyl-8-(1-D-ribityl)lumazine + phosphate + 2 H2O + H(+). Its pathway is cofactor biosynthesis; riboflavin biosynthesis; riboflavin from 2-hydroxy-3-oxobutyl phosphate and 5-amino-6-(D-ribitylamino)uracil: step 1/2. Catalyzes the formation of 6,7-dimethyl-8-ribityllumazine by condensation of 5-amino-6-(D-ribitylamino)uracil with 3,4-dihydroxy-2-butanone 4-phosphate. This is the penultimate step in the biosynthesis of riboflavin. The protein is 6,7-dimethyl-8-ribityllumazine synthase of Wigglesworthia glossinidia brevipalpis.